Consider the following 162-residue polypeptide: NADH-quinone oxidoreductase subunit I (162 aa).

2 4Fe-4S ferredoxin-type domains span residues 53–83 and 93–122; these read LRRY…IEAE and TRYD…EGPN. The [4Fe-4S] cluster site is built by Cys63, Cys66, Cys69, Cys73, Cys102, Cys105, Cys108, and Cys112.

It belongs to the complex I 23 kDa subunit family. NDH-1 is composed of 14 different subunits. Subunits NuoA, H, J, K, L, M, N constitute the membrane sector of the complex. [4Fe-4S] cluster is required as a cofactor.

The protein localises to the cell inner membrane. The enzyme catalyses a quinone + NADH + 5 H(+)(in) = a quinol + NAD(+) + 4 H(+)(out). Functionally, NDH-1 shuttles electrons from NADH, via FMN and iron-sulfur (Fe-S) centers, to quinones in the respiratory chain. The immediate electron acceptor for the enzyme in this species is believed to be ubiquinone. Couples the redox reaction to proton translocation (for every two electrons transferred, four hydrogen ions are translocated across the cytoplasmic membrane), and thus conserves the redox energy in a proton gradient. This chain is NADH-quinone oxidoreductase subunit I, found in Rhodospirillum centenum (strain ATCC 51521 / SW).